An 844-amino-acid polypeptide reads, in one-letter code: Patched-related protein 9 (844 aa).

Residues Leu264–Leu421 enclose the SSD domain.

It belongs to the patched family.

In Caenorhabditis elegans, this protein is Patched-related protein 9 (ptr-9).